The sequence spans 135 residues: Large ribosomal subunit protein uL16c (135 aa).

Belongs to the universal ribosomal protein uL16 family. In terms of assembly, part of the 50S ribosomal subunit.

The protein resides in the plastid. It localises to the chloroplast. The chain is Large ribosomal subunit protein uL16c from Populus alba (White poplar).